The sequence spans 283 residues: 2-dehydro-3-deoxyphosphooctonate aldolase (283 aa).

It belongs to the KdsA family.

The protein resides in the cytoplasm. It catalyses the reaction D-arabinose 5-phosphate + phosphoenolpyruvate + H2O = 3-deoxy-alpha-D-manno-2-octulosonate-8-phosphate + phosphate. It functions in the pathway carbohydrate biosynthesis; 3-deoxy-D-manno-octulosonate biosynthesis; 3-deoxy-D-manno-octulosonate from D-ribulose 5-phosphate: step 2/3. The protein operates within bacterial outer membrane biogenesis; lipopolysaccharide biosynthesis. The protein is 2-dehydro-3-deoxyphosphooctonate aldolase of Parasynechococcus marenigrum (strain WH8102).